Reading from the N-terminus, the 155-residue chain is DNA gyrase inhibitor (155 aa).

This sequence belongs to the DNA gyrase inhibitor family. As to quaternary structure, interacts with DNA gyrase.

Its subcellular location is the cytoplasm. Inhibits the supercoiling activity of DNA gyrase. Acts by inhibiting DNA gyrase at an early step, prior to (or at the step of) binding of DNA by the gyrase. It protects cells against toxins that target DNA gyrase, by inhibiting activity of these toxins and reducing the formation of lethal double-strand breaks in the cell. The polypeptide is DNA gyrase inhibitor (Erwinia billingiae (strain Eb661)).